The following is a 142-amino-acid chain: SPbeta prophage-derived deoxyuridine 5'-triphosphate nucleotidohydrolase YosS (142 aa).

Residues Ser-62 and Asn-74 each coordinate dUMP. The Proton acceptor role is filled by Asp-80. Positions 83 and 91 each coordinate dUMP.

The protein belongs to the dUTPase family. As to quaternary structure, homotrimer. Requires Mg(2+) as cofactor.

It catalyses the reaction dUTP + H2O = dUMP + diphosphate + H(+). It participates in pyrimidine metabolism; dUMP biosynthesis; dUMP from dCTP (dUTP route): step 2/2. Its function is as follows. Involved in nucleotide metabolism: produces dUMP, the immediate precursor of thymidine nucleotides and decreases the intracellular concentration of dUTP, so that uracil cannot be incorporated into DNA. The Ser-62 side chain changes its position upon ligand-binding to make contacts with the nucleotide phosphates. The chain is SPbeta prophage-derived deoxyuridine 5'-triphosphate nucleotidohydrolase YosS from Bacillus subtilis (strain 168).